Consider the following 281-residue polypeptide: Protein ZAR1-like 1.S (281 aa).

Residues 183–267 (QKYGFFQCKD…QDLCGRCKGQ (85 aa)) form a 3CxxC-type zinc finger.

This sequence belongs to the ZAR1 family. Component of a cytoplasmic ribonucleoprotein complex together with eif4enif1/4E-T and cpeb1. In terms of tissue distribution, expressed in oocytes.

The protein localises to the cytoplasm. The protein resides in the cytoplasmic ribonucleoprotein granule. MRNA-binding protein required for maternal mRNA storage, translation and degradation during oocyte maturation. Controls timing of meiosis during oogenesis. Probably promotes formation of some phase-separated membraneless compartment that stores maternal mRNAs in oocytes: acts by undergoing liquid-liquid phase separation upon binding to maternal mRNAs. Binds to the 3'-UTR of maternal mRNAs, inhibiting their translation. The protein is Protein ZAR1-like 1.S of Xenopus laevis (African clawed frog).